A 363-amino-acid chain; its full sequence is MKCGFFHTPYNLPTRTARQMFDWSLKLAQVCDEAGFADFMIGEHSTLAWENIPCPEIIIGAAAPLTKNIRFAPMAHLLPYHNPATLAIQIGWLSQILEGRYFLGVAPGGHHTDAILHGFEGIGPLQEQMFESLELMEKIWAREPFMEKGKFFQAGFPGPDTMPEYDVEIADNSPWGGRESMEVAVTGLTKNSSSLKWAGERNYSPISFFGGHEVMRSHYDTWAAAMQSKGFTPERSRFRVTRDIFIADTDAEAKKRAKASGLGKSWEHYLFPIYKKFNLFPGIIADAGLDIDPSQVDMDFLAEHVWLCGSPETVKGKIERMMERSGGCGQIVVCSHDNIDNPEPYFESLQRLASEVLPKVRMG.

Residues Met74 and 186–194 contribute to the FMN site; that span reads TGLTKNSSS.

Belongs to the bacterial luciferase oxidoreductase family. As to quaternary structure, homodimer. Likely forms a loose transient complex with a P.putida flavin reductase that provides the required FMNH(2) to the enzyme.

The enzyme catalyses (1R,4R)-bornane-2,5-dione + FMNH2 + O2 = (1R,4R)-5-oxo-1,2-campholide + FMN + H2O + H(+). The protein operates within terpene metabolism; (R)-camphor degradation. In terms of biological role, involved in the degradation and assimilation of (+)-camphor, which allows P.putida strain NCIMB 10007 to grow on this enantiomer of camphor as the sole carbon source. Catalyzes the FMNH(2)-dependent lactonization of 2,5-diketocamphane via a Baeyer-Villiger oxidation to produce the unstable lactone 5-oxo-1,2-campholide with (R,R) configuration, that presumably undergoes spontaneous hydrolysis to form 2-oxo-Delta(3)-4,5,5-trimethylcyclopentenylacetate. Is also able to convert (+)-camphor and norcamphor to the corresponding lactone in vitro. Shows no conversion of (-)-camphor, (+)-fenchone, (-)-fenchone, and (+)-nopinone. Acts only on bicyclic ketones; is not active towards monocyclic ketones, aromatic ketones, the aliphatic 2-decanone, 1-indanone and progesterone. This Pseudomonas putida (Arthrobacter siderocapsulatus) protein is 2,5-diketocamphane 1,2-monooxygenase 1.